Here is a 523-residue protein sequence, read N- to C-terminus: ATP synthase subunit alpha (523 aa).

ATP is bound at residue G179–T186.

Belongs to the ATPase alpha/beta chains family. F-type ATPases have 2 components, CF(1) - the catalytic core - and CF(0) - the membrane proton channel. CF(1) has five subunits: alpha(3), beta(3), gamma(1), delta(1), epsilon(1). CF(0) has three main subunits: a(1), b(2) and c(9-12). The alpha and beta chains form an alternating ring which encloses part of the gamma chain. CF(1) is attached to CF(0) by a central stalk formed by the gamma and epsilon chains, while a peripheral stalk is formed by the delta and b chains.

It localises to the cell inner membrane. The catalysed reaction is ATP + H2O + 4 H(+)(in) = ADP + phosphate + 5 H(+)(out). Its function is as follows. Produces ATP from ADP in the presence of a proton gradient across the membrane. The alpha chain is a regulatory subunit. The polypeptide is ATP synthase subunit alpha (Vibrio vulnificus (strain YJ016)).